Here is a 118-residue protein sequence, read N- to C-terminus: NADH dehydrogenase [ubiquinone] iron-sulfur protein 5-A (118 aa).

A CHCH domain is found at 46–87 (KGRCYDFWMDFSECMSHCREPKDCTLLREDYLECLHHSKEFQ). 2 short sequence motifs (cx9C motif) span residues 49–59 (CYDFWMDFSEC) and 69–79 (CTLLREDYLEC). 2 cysteine pairs are disulfide-bonded: C49–C79 and C59–C69. The tract at residues 98-118 (RKLRAASRKGEEAGDGTHNHH) is disordered.

Belongs to the complex I NDUFS5 subunit family. Complex I is composed of at least 49 different subunits. This is a component of the iron-sulfur (IP) fragment of the enzyme.

It localises to the mitochondrion. The protein localises to the mitochondrion inner membrane. Its subcellular location is the mitochondrion intermembrane space. Functionally, accessory subunit of the mitochondrial membrane respiratory chain NADH dehydrogenase (Complex I), that is believed not to be involved in catalysis. Complex I functions in the transfer of electrons from NADH to the respiratory chain. The immediate electron acceptor for the enzyme is believed to be ubiquinone. The protein is NADH dehydrogenase [ubiquinone] iron-sulfur protein 5-A of Arabidopsis thaliana (Mouse-ear cress).